A 69-amino-acid polypeptide reads, in one-letter code: uncharacterized protein (69 aa).

Over 1–15 (MLLYIVIIVACIISK) the chain is Cytoplasmic. The chain crosses the membrane as a helical span at residues 16-36 (LVPNEYWAIHLFFIIMIFMVY). At 37 to 69 (MYEKLDIHQKYQFWNYTMSGLSGHNVQVICKCY) the chain is on the extracellular side. The N-linked (GlcNAc...) asparagine; by host glycan is linked to asparagine 51.

This sequence belongs to the asfivirus X69R family.

It is found in the host membrane. This is an uncharacterized protein from Ornithodoros (relapsing fever ticks).